A 38-amino-acid polypeptide reads, in one-letter code: Large ribosomal subunit protein bL36 (38 aa).

The protein belongs to the bacterial ribosomal protein bL36 family.

The polypeptide is Large ribosomal subunit protein bL36 (Bacteroides fragilis (strain ATCC 25285 / DSM 2151 / CCUG 4856 / JCM 11019 / LMG 10263 / NCTC 9343 / Onslow / VPI 2553 / EN-2)).